Reading from the N-terminus, the 365-residue chain is U1 snRNP-associated protein usp109 (365 aa).

RRM domains are found at residues 3 to 79 (TSLW…VVPE), 86 to 162 (YMLF…SVKS), and 189 to 259 (TAVY…WARP).

In terms of assembly, component of the U1 snRNP complex.

It localises to the nucleus. The sequence is that of U1 snRNP-associated protein usp109 (usp109) from Schizosaccharomyces pombe (strain 972 / ATCC 24843) (Fission yeast).